Here is a 217-residue protein sequence, read N- to C-terminus: Thiopurine S-methyltransferase (217 aa).

4 residues coordinate S-adenosyl-L-methionine: W11, L46, E67, and R122.

This sequence belongs to the class I-like SAM-binding methyltransferase superfamily. TPMT family.

Its subcellular location is the cytoplasm. The catalysed reaction is S-adenosyl-L-methionine + a thiopurine = S-adenosyl-L-homocysteine + a thiopurine S-methylether.. The polypeptide is Thiopurine S-methyltransferase (Vibrio atlanticus (strain LGP32) (Vibrio splendidus (strain Mel32))).